Consider the following 54-residue polypeptide: Large ribosomal subunit protein bL33B (54 aa).

The protein belongs to the bacterial ribosomal protein bL33 family.

The chain is Large ribosomal subunit protein bL33B from Mycolicibacterium vanbaalenii (strain DSM 7251 / JCM 13017 / BCRC 16820 / KCTC 9966 / NRRL B-24157 / PYR-1) (Mycobacterium vanbaalenii).